The primary structure comprises 100 residues: Aspartyl/glutamyl-tRNA(Asn/Gln) amidotransferase subunit C (100 aa).

This sequence belongs to the GatC family. In terms of assembly, heterotrimer of A, B and C subunits.

It carries out the reaction L-glutamyl-tRNA(Gln) + L-glutamine + ATP + H2O = L-glutaminyl-tRNA(Gln) + L-glutamate + ADP + phosphate + H(+). The enzyme catalyses L-aspartyl-tRNA(Asn) + L-glutamine + ATP + H2O = L-asparaginyl-tRNA(Asn) + L-glutamate + ADP + phosphate + 2 H(+). Functionally, allows the formation of correctly charged Asn-tRNA(Asn) or Gln-tRNA(Gln) through the transamidation of misacylated Asp-tRNA(Asn) or Glu-tRNA(Gln) in organisms which lack either or both of asparaginyl-tRNA or glutaminyl-tRNA synthetases. The reaction takes place in the presence of glutamine and ATP through an activated phospho-Asp-tRNA(Asn) or phospho-Glu-tRNA(Gln). This chain is Aspartyl/glutamyl-tRNA(Asn/Gln) amidotransferase subunit C, found in Staphylococcus carnosus (strain TM300).